The chain runs to 227 residues: DNA repair protein RecO (227 aa).

Belongs to the RecO family.

Involved in DNA repair and RecF pathway recombination. The sequence is that of DNA repair protein RecO from Pseudomonas savastanoi pv. phaseolicola (strain 1448A / Race 6) (Pseudomonas syringae pv. phaseolicola (strain 1448A / Race 6)).